The following is a 382-amino-acid chain: Succinyl-diaminopimelate desuccinylase (382 aa).

H70 serves as a coordination point for Zn(2+). The active site involves D72. D103 is a Zn(2+) binding site. E137 functions as the Proton acceptor in the catalytic mechanism. Zn(2+) contacts are provided by E138, E166, and H355.

This sequence belongs to the peptidase M20A family. DapE subfamily. As to quaternary structure, homodimer. Requires Zn(2+) as cofactor. It depends on Co(2+) as a cofactor.

The enzyme catalyses N-succinyl-(2S,6S)-2,6-diaminopimelate + H2O = (2S,6S)-2,6-diaminopimelate + succinate. The protein operates within amino-acid biosynthesis; L-lysine biosynthesis via DAP pathway; LL-2,6-diaminopimelate from (S)-tetrahydrodipicolinate (succinylase route): step 3/3. Its function is as follows. Catalyzes the hydrolysis of N-succinyl-L,L-diaminopimelic acid (SDAP), forming succinate and LL-2,6-diaminopimelate (DAP), an intermediate involved in the bacterial biosynthesis of lysine and meso-diaminopimelic acid, an essential component of bacterial cell walls. The sequence is that of Succinyl-diaminopimelate desuccinylase from Paracoccus denitrificans (strain Pd 1222).